The primary structure comprises 122 residues: Large ribosomal subunit protein bL12 (122 aa).

It belongs to the bacterial ribosomal protein bL12 family. As to quaternary structure, homodimer. Part of the ribosomal stalk of the 50S ribosomal subunit. Forms a multimeric L10(L12)X complex, where L10 forms an elongated spine to which 2 to 4 L12 dimers bind in a sequential fashion. Binds GTP-bound translation factors.

Its function is as follows. Forms part of the ribosomal stalk which helps the ribosome interact with GTP-bound translation factors. Is thus essential for accurate translation. This chain is Large ribosomal subunit protein bL12, found in Clostridium botulinum (strain 657 / Type Ba4).